Consider the following 882-residue polypeptide: DNA mismatch repair protein MutS (882 aa).

An ATP-binding site is contributed by 627–634 (GPNMAGKS).

Belongs to the DNA mismatch repair MutS family.

This protein is involved in the repair of mismatches in DNA. It is possible that it carries out the mismatch recognition step. This protein has a weak ATPase activity. The protein is DNA mismatch repair protein MutS of Anaeromyxobacter dehalogenans (strain 2CP-1 / ATCC BAA-258).